The following is a 196-amino-acid chain: Superoxide dismutase [Fe] (196 aa).

Fe cation-binding residues include histidine 20, histidine 68, aspartate 157, and histidine 161.

It belongs to the iron/manganese superoxide dismutase family. Homotetramer. It depends on Fe cation as a cofactor.

It catalyses the reaction 2 superoxide + 2 H(+) = H2O2 + O2. Its function is as follows. Destroys superoxide anion radicals which are normally produced within the cells and which are toxic to biological systems. The sequence is that of Superoxide dismutase [Fe] from Tetrahymena pyriformis.